The following is a 79-amino-acid chain: Beta-hexatoxin-Mg1a (79 aa).

Residues 1 to 20 form the signal peptide; it reads MKAPATTLILVMSLISVLWA. Residues 21-50 constitute a propeptide that is removed on maturation; the sequence is TPDLEEGDLLAELGDLIATDDEYPMKPEER. 3 disulfides stabilise this stretch: Cys52-Cys66, Cys59-Cys71, and Cys65-Cys76.

Belongs to the neurotoxin 15 family. 01 (magi-5) subfamily. In terms of tissue distribution, expressed by the venom gland.

The protein localises to the secreted. In terms of biological role, insect and vertebrate active toxin. Binds to site 4 of mammalian voltage-gated sodium channels and shifts the activation voltage of the mammalian Nav1.2a/SCN2A channel to more hyperpolarized voltages, whereas the insect channel, DmNav1 (para), is not affected. Competes for binding at site 3 of the insect sodium channel. Causes temporary paralysis when injected into lepidopteran larvae at 8.6 nmol/g. A low intracranial injection dose into mice causes lacrimation, closure of the eyes and sweating. A high injection dose causes extensive lacrimation and death. In Macrothele gigas (Japanese funnel web spider), this protein is Beta-hexatoxin-Mg1a.